Consider the following 62-residue polypeptide: Photosystem II reaction center protein Z (62 aa).

Transmembrane regions (helical) follow at residues 8 to 28 (AVFA…VALA) and 41 to 61 (FSGV…NSFI).

This sequence belongs to the PsbZ family. As to quaternary structure, PSII is composed of 1 copy each of membrane proteins PsbA, PsbB, PsbC, PsbD, PsbE, PsbF, PsbH, PsbI, PsbJ, PsbK, PsbL, PsbM, PsbT, PsbY, PsbZ, Psb30/Ycf12, at least 3 peripheral proteins of the oxygen-evolving complex and a large number of cofactors. It forms dimeric complexes.

The protein localises to the plastid. It localises to the chloroplast thylakoid membrane. Its function is as follows. May control the interaction of photosystem II (PSII) cores with the light-harvesting antenna, regulates electron flow through the 2 photosystem reaction centers. PSII is a light-driven water plastoquinone oxidoreductase, using light energy to abstract electrons from H(2)O, generating a proton gradient subsequently used for ATP formation. This Pinus thunbergii (Japanese black pine) protein is Photosystem II reaction center protein Z.